The primary structure comprises 485 residues: NADH-quinone oxidoreductase subunit N (485 aa).

14 consecutive transmembrane segments (helical) span residues 8-28 (LIAL…MLSI), 35-55 (FLNA…LWFV), 75-95 (LYTG…YPWL), 105-125 (FYLL…ANHL), 127-147 (SLFL…GYAF), 159-179 (YTIL…LVYA), 203-223 (LLAG…LVPF), 235-255 (PAPV…GVVM), 271-291 (VVLG…ALTQ), 297-317 (LLGY…IALK), 326-346 (VGVY…VVSL), 374-394 (AVMT…GFIG), 408-427 (WWLT…YYLR), and 455-475 (VVVL…QPLI).

It belongs to the complex I subunit 2 family. In terms of assembly, NDH-1 is composed of 13 different subunits. Subunits NuoA, H, J, K, L, M, N constitute the membrane sector of the complex.

It is found in the cell inner membrane. It carries out the reaction a quinone + NADH + 5 H(+)(in) = a quinol + NAD(+) + 4 H(+)(out). NDH-1 shuttles electrons from NADH, via FMN and iron-sulfur (Fe-S) centers, to quinones in the respiratory chain. The immediate electron acceptor for the enzyme in this species is believed to be ubiquinone. Couples the redox reaction to proton translocation (for every two electrons transferred, four hydrogen ions are translocated across the cytoplasmic membrane), and thus conserves the redox energy in a proton gradient. In Cronobacter sakazakii (strain ATCC BAA-894) (Enterobacter sakazakii), this protein is NADH-quinone oxidoreductase subunit N.